Consider the following 156-residue polypeptide: Cyanate hydratase (156 aa).

Residues R96, E99, and S122 contribute to the active site.

Belongs to the cyanase family.

The catalysed reaction is cyanate + hydrogencarbonate + 3 H(+) = NH4(+) + 2 CO2. In terms of biological role, catalyzes the reaction of cyanate with bicarbonate to produce ammonia and carbon dioxide. This is Cyanate hydratase from Burkholderia orbicola (strain MC0-3).